Here is a 202-residue protein sequence, read N- to C-terminus: B-cell CLL/lymphoma 7 protein family member B (202 aa).

A disordered region spans residues 53 to 202 (DSKEKEKSKS…PVVPQTTSES (150 aa)). Polar residues predominate over residues 90–99 (ENSNQSSVSD). Over residues 107–123 (SSTNSSPSPQQSESLSP) the composition is skewed to low complexity. Phosphoserine occurs at positions 114, 118, 120, 122, 127, 148, and 152.

This sequence belongs to the BCL7 family.

Functionally, positive regulator of apoptosis. Plays a role in the Wnt signaling pathway, negatively regulating the expression of Wnt signaling components CTNNB1 and HMGA1. Involved in cell cycle progression, maintenance of the nuclear structure and stem cell differentiation. May play a role in lung tumor development or progression. In Mus musculus (Mouse), this protein is B-cell CLL/lymphoma 7 protein family member B (Bcl7b).